Here is a 205-residue protein sequence, read N- to C-terminus: Large ribosomal subunit protein bL9 (205 aa).

A disordered region spans residues 160–205 (RDRKSRNAAAASEVQDAPVEDGGDEVVSVDSVAAEDGGADASGGTA). Over residues 184–195 (EVVSVDSVAAED) the composition is skewed to low complexity.

The protein belongs to the bacterial ribosomal protein bL9 family.

In terms of biological role, binds to the 23S rRNA. The chain is Large ribosomal subunit protein bL9 from Anaplasma phagocytophilum (strain HZ).